Reading from the N-terminus, the 274-residue chain is Large ribosomal subunit protein uL2cz/uL2cy (274 aa).

2 disordered regions span residues 1–24 and 223–274; these read MAIH…QVKS and MNPV…RRSK. A compositionally biased stretch (polar residues) spans 7-24; the sequence is KTSTPSTRNGTVDSQVKS.

It belongs to the universal ribosomal protein uL2 family. Part of the 50S ribosomal subunit.

Its subcellular location is the plastid. It localises to the chloroplast. The chain is Large ribosomal subunit protein uL2cz/uL2cy (rpl2-A) from Nicotiana sylvestris (Wood tobacco).